A 448-amino-acid polypeptide reads, in one-letter code: Fibulin-5 (448 aa).

The N-terminal stretch at 1-23 is a signal peptide; the sequence is MPGLKRILTVTILALWLPHPGNA. Residues 42 to 82 enclose the EGF-like 1; calcium-binding domain; it reads DIDECRTIPEACRGDMMCVNQNGGYLCIPRTNPVYRGPYSN. Cystine bridges form between C46–C59, C53–C68, C131–C144, C138–C153, C155–C166, C172–C181, C177–C190, C192–C205, C211–C221, C217–C230, C232–C245, C251–C262, C258–C271, C273–C286, C292–C305, C299–C314, and C320–C332. Residues 54–56 carry the Cell attachment site motif; that stretch reads RGD. Residues 127 to 167 form the EGF-like 2; calcium-binding domain; the sequence is DVDECATDSHQCNPTQICINTEGGYTCSCTDGYWLLEGQCL. One can recognise an EGF-like 3; calcium-binding domain in the interval 168–206; that stretch reads DIDECRYGYCQQLCANVPGSYSCTCNPGFTLNDDGRSCQ. The region spanning 207 to 246 is the EGF-like 4; calcium-binding domain; sequence DVNECETENPCVQTCVNTYGSFICRCDPGYELEEDGIHCS. Residues 245–448 form an interaction with LOXL1 region; sequence CSDMDECSFS…LRIYVSQYPF (204 aa). The EGF-like 5; calcium-binding domain maps to 247–287; it reads DMDECSFSEFLCQHECVNQPGSYFCSCPPGYVLLEDNRSCQ. N-linked (GlcNAc...) asparagine glycosylation is found at N283 and N296. Residues 288–333 enclose the EGF-like 6; calcium-binding domain; sequence DINECEHRNHTCTPLQTCYNLQGGFKCIDPIVCEEPYLLIGDNRCM.

The protein belongs to the fibulin family. In terms of assembly, homodimer. Monomer, homodimerizes in presence of Ca(2+). Interacts with ELN. Interacts (via N-terminus) with the integrins ITGAV/ITGB3, ITGAV/ITGB5 and ITGA9/ITGB1. Interacts with FBN1 (via N-terminal domain). Forms a ternary complex with ELN and FBN1. Interacts with EFEMP2 with moderate affinity. Interacts with LOXL1. Post-translationally, N-glycosylated.

The protein resides in the secreted. It is found in the extracellular space. Its subcellular location is the extracellular matrix. Its function is as follows. Essential for elastic fiber formation, is involved in the assembly of continuous elastin (ELN) polymer and promotes the interaction of microfibrils and ELN. Stabilizes and organizes elastic fibers in the skin, lung and vasculature. Promotes adhesion of endothelial cells through interaction of integrins and the RGD motif. Vascular ligand for integrin receptors which may play a role in vascular development and remodeling. May act as an adapter that mediates the interaction between FBN1 and ELN. This is Fibulin-5 (Fbln5) from Rattus norvegicus (Rat).